Consider the following 659-residue polypeptide: DNA mismatch repair protein MutL (659 aa).

The protein belongs to the DNA mismatch repair MutL/HexB family.

In terms of biological role, this protein is involved in the repair of mismatches in DNA. It is required for dam-dependent methyl-directed DNA mismatch repair. May act as a 'molecular matchmaker', a protein that promotes the formation of a stable complex between two or more DNA-binding proteins in an ATP-dependent manner without itself being part of a final effector complex. In Ligilactobacillus salivarius (strain UCC118) (Lactobacillus salivarius), this protein is DNA mismatch repair protein MutL.